The chain runs to 913 residues: Calcium-activated chloride channel regulator 1 (913 aa).

An N-terminal signal peptide occupies residues 1-21; it reads MGSFKSSVFILVLHLLEGALS. A metalloprotease domain region spans residues 46–199; that stretch reads DETLIQQIKD…DIAGKNVVNH (154 aa). Histidine 156 provides a ligand contact to Zn(2+). Glutamate 157 is an active-site residue. The Zn(2+) site is built by histidine 160 and asparagine 167. One can recognise a VWFA domain in the interval 306-475; that stretch reads IVCLVLDKSG…NGLIDAFGAL (170 aa). N-linked (GlcNAc...) asparagine glycans are attached at residues asparagine 503, asparagine 514, asparagine 770, asparagine 804, asparagine 810, asparagine 836, and asparagine 885.

The protein belongs to the CLCR family. Post-translationally, glycosylated. The translation product is autoproteolytically cleaved by the metalloprotease domain in the endoplasmic reticulum into a N-terminal and a C-terminal products that remain physically associated with each other. The cleavage is necessary for calcium-activated chloride channel (CaCC) activation activity. In terms of tissue distribution, expressed in mucin-producing cells in the respiratory and intestinal tracts, cutaneous sweat glands, and renal mucous glands (at protein level). Strong overexpression in the airways of horses with recurrent airway obstruction (at protein level).

The protein localises to the secreted. It is found in the extracellular space. May be involved in mediating calcium-activated chloride conductance. May play critical roles in goblet cell metaplasia, mucus hypersecretion, cystic fibrosis and AHR. May be involved in the regulation of mucus production and/or secretion by goblet cells. Involved in the regulation of tissue inflammation in the innate immune response. May play a role as a tumor suppressor. Induces MUC5AC. The protein is Calcium-activated chloride channel regulator 1 (CLCA1) of Equus caballus (Horse).